We begin with the raw amino-acid sequence, 94 residues long: Co-chaperonin GroES (94 aa).

It belongs to the GroES chaperonin family. Heptamer of 7 subunits arranged in a ring. Interacts with the chaperonin GroEL.

The protein resides in the cytoplasm. In terms of biological role, together with the chaperonin GroEL, plays an essential role in assisting protein folding. The GroEL-GroES system forms a nano-cage that allows encapsulation of the non-native substrate proteins and provides a physical environment optimized to promote and accelerate protein folding. GroES binds to the apical surface of the GroEL ring, thereby capping the opening of the GroEL channel. This chain is Co-chaperonin GroES, found in Parageobacillus thermoglucosidasius (Geobacillus thermoglucosidasius).